A 377-amino-acid polypeptide reads, in one-letter code: Chaperone protein DnaJ (377 aa).

The J domain maps to 4–69; the sequence is DYYEALGVTR…QKRAAYDRFG (66 aa). Residues 135 to 213 form a CR-type zinc finger; the sequence is GKTAQIRVPT…CHGQGRVTQE (79 aa). Cysteine 148, cysteine 151, cysteine 165, cysteine 168, cysteine 187, cysteine 190, cysteine 201, and cysteine 204 together coordinate Zn(2+). 4 CXXCXGXG motif repeats span residues 148–155, 165–172, 187–194, and 201–208; these read CDECSGSG, CTMCSGSG, CPGCNGRG, and CEKCHGQG.

Belongs to the DnaJ family. In terms of assembly, homodimer. It depends on Zn(2+) as a cofactor.

It is found in the cytoplasm. In terms of biological role, participates actively in the response to hyperosmotic and heat shock by preventing the aggregation of stress-denatured proteins and by disaggregating proteins, also in an autonomous, DnaK-independent fashion. Unfolded proteins bind initially to DnaJ; upon interaction with the DnaJ-bound protein, DnaK hydrolyzes its bound ATP, resulting in the formation of a stable complex. GrpE releases ADP from DnaK; ATP binding to DnaK triggers the release of the substrate protein, thus completing the reaction cycle. Several rounds of ATP-dependent interactions between DnaJ, DnaK and GrpE are required for fully efficient folding. Also involved, together with DnaK and GrpE, in the DNA replication of plasmids through activation of initiation proteins. In Brucella ovis (strain ATCC 25840 / 63/290 / NCTC 10512), this protein is Chaperone protein DnaJ.